The sequence spans 451 residues: Bifunctional protein GlmU (451 aa).

The tract at residues 1 to 232 (MTARSSLTIV…EDEVRGINTK (232 aa)) is pyrophosphorylase. UDP-N-acetyl-alpha-D-glucosamine contacts are provided by residues 11–14 (LAAG), Lys-25, Gln-78, and 83–84 (GT). Residue Asp-108 coordinates Mg(2+). Gly-144, Glu-158, Asn-173, and Asn-230 together coordinate UDP-N-acetyl-alpha-D-glucosamine. A Mg(2+)-binding site is contributed by Asn-230. Residues 233–253 (AQLAEAESVMQARLRKAAMEA) are linker. The tract at residues 254–451 (GVTLIAPETV…MKTRGKKPEK (198 aa)) is N-acetyltransferase. Positions 319 and 337 each coordinate UDP-N-acetyl-alpha-D-glucosamine. His-349 serves as the catalytic Proton acceptor. UDP-N-acetyl-alpha-D-glucosamine contacts are provided by Tyr-352 and Asn-363. Residues Ala-366, 372–373 (NY), Ser-409, and Arg-426 contribute to the acetyl-CoA site.

It in the N-terminal section; belongs to the N-acetylglucosamine-1-phosphate uridyltransferase family. The protein in the C-terminal section; belongs to the transferase hexapeptide repeat family. In terms of assembly, homotrimer. Mg(2+) is required as a cofactor.

It is found in the cytoplasm. The catalysed reaction is alpha-D-glucosamine 1-phosphate + acetyl-CoA = N-acetyl-alpha-D-glucosamine 1-phosphate + CoA + H(+). The enzyme catalyses N-acetyl-alpha-D-glucosamine 1-phosphate + UTP + H(+) = UDP-N-acetyl-alpha-D-glucosamine + diphosphate. It participates in nucleotide-sugar biosynthesis; UDP-N-acetyl-alpha-D-glucosamine biosynthesis; N-acetyl-alpha-D-glucosamine 1-phosphate from alpha-D-glucosamine 6-phosphate (route II): step 2/2. The protein operates within nucleotide-sugar biosynthesis; UDP-N-acetyl-alpha-D-glucosamine biosynthesis; UDP-N-acetyl-alpha-D-glucosamine from N-acetyl-alpha-D-glucosamine 1-phosphate: step 1/1. Its pathway is bacterial outer membrane biogenesis; LPS lipid A biosynthesis. In terms of biological role, catalyzes the last two sequential reactions in the de novo biosynthetic pathway for UDP-N-acetylglucosamine (UDP-GlcNAc). The C-terminal domain catalyzes the transfer of acetyl group from acetyl coenzyme A to glucosamine-1-phosphate (GlcN-1-P) to produce N-acetylglucosamine-1-phosphate (GlcNAc-1-P), which is converted into UDP-GlcNAc by the transfer of uridine 5-monophosphate (from uridine 5-triphosphate), a reaction catalyzed by the N-terminal domain. In Bradyrhizobium diazoefficiens (strain JCM 10833 / BCRC 13528 / IAM 13628 / NBRC 14792 / USDA 110), this protein is Bifunctional protein GlmU.